The chain runs to 98 residues: Citrate lyase acyl carrier protein (98 aa).

At S14 the chain carries O-(phosphoribosyl dephospho-coenzyme A)serine.

This sequence belongs to the CitD family. In terms of assembly, oligomer with a subunit composition of (alpha,beta,gamma)6.

It localises to the cytoplasm. In terms of biological role, covalent carrier of the coenzyme of citrate lyase. The chain is Citrate lyase acyl carrier protein from Citrobacter koseri (strain ATCC BAA-895 / CDC 4225-83 / SGSC4696).